The sequence spans 573 residues: Cytochrome P450 monooxygenase GME11363 (573 aa).

The chain crosses the membrane as a helical span at residues 10–30 (IGVVAAVLLAALILLYRAALP). Residue cysteine 519 participates in heme binding.

The protein belongs to the cytochrome P450 family. The cofactor is heme.

Its subcellular location is the membrane. The protein operates within secondary metabolite biosynthesis. Cytochrome P450 monooxygenase; part of the gene cluster that mediates the biosynthesis of dibenzodioxocinones such as pestalotiollide B, a novel class of inhibitors against cholesterol ester transfer protein (CEPT). The biosynthesis initiates from condensation of acetate and malonate units catalyzed by the non-reducing PKS pks8/GME11356. Pks8/GME11356 lacks a thioesterase (TE) domain, which is important to the cyclizing of the third ring of atrochrysone carboxylic acid, and the esterase GME11355 might play the role of TE and catalyzes the cyclization reaction of the C ring. The lactamase-like protein GME11357 (or other beta-lactamases in Pestalotiopsis microspora) probably hydrolyzes the thioester bond between the ACP of pks8/GME11356 and the intermediate to release atrochrysone carboxylic acid, which is spontaneously dehydrates to form endocrocin anthrone. Endocrocin anthrone is further converted to emodin via the endocrocin intermediate. Emodin is then oxidized by several enzymes such as the Baeyer-Villiger oxidase GME11358, the oxidoreductase GME11367, the short chain dehydrogenase/reductase GME11373, as well as by other oxidoreductases from the cluster, to modify the A and C rings and open the B ring, and finally yield monodictyphenone. The prenyltransferase GME11375 may catalyze the addition reaction between the C5 side chains and the carbon bone of dibenzodioxocinones. The remaining biochemical reactions to the final product dibenzodioxocinones should be methylation catalyzed by methyltransferase GME11366 and reduction and lactonization reaction catalyzed by a series of oxidordeuctases. The sequence is that of Cytochrome P450 monooxygenase GME11363 from Pestalotiopsis microspora.